The sequence spans 144 residues: Bacilliredoxin SSP1311 (144 aa).

The protein belongs to the bacilliredoxin family.

The protein is Bacilliredoxin SSP1311 of Staphylococcus saprophyticus subsp. saprophyticus (strain ATCC 15305 / DSM 20229 / NCIMB 8711 / NCTC 7292 / S-41).